Reading from the N-terminus, the 453-residue chain is Adenosylmethionine-8-amino-7-oxononanoate aminotransferase (453 aa).

118-119 (GS) provides a ligand contact to pyridoxal 5'-phosphate. Tyr-151 serves as a coordination point for substrate. Residue Asp-258 participates in pyridoxal 5'-phosphate binding. Positions 287, 322, and 417 each coordinate substrate. The residue at position 287 (Lys-287) is an N6-(pyridoxal phosphate)lysine.

This sequence belongs to the class-III pyridoxal-phosphate-dependent aminotransferase family. BioA subfamily. In terms of assembly, homodimer. Pyridoxal 5'-phosphate is required as a cofactor.

Its subcellular location is the cytoplasm. It carries out the reaction (8S)-8-amino-7-oxononanoate + S-adenosyl-L-methionine = S-adenosyl-4-methylsulfanyl-2-oxobutanoate + (7R,8S)-7,8-diammoniononanoate. The protein operates within cofactor biosynthesis; biotin biosynthesis; 7,8-diaminononanoate from 8-amino-7-oxononanoate (SAM route): step 1/1. Catalyzes the transfer of the alpha-amino group from S-adenosyl-L-methionine (SAM) to 7-keto-8-aminopelargonic acid (KAPA) to form 7,8-diaminopelargonic acid (DAPA). It is the only aminotransferase known to utilize SAM as an amino donor. The chain is Adenosylmethionine-8-amino-7-oxononanoate aminotransferase from Geobacter sulfurreducens (strain ATCC 51573 / DSM 12127 / PCA).